The sequence spans 226 residues: ATP synthase F(0) complex subunit a (226 aa).

6 helical membrane passes run 14 to 34 (ILGI…FSAP), 68 to 88 (WTLM…LGLL), 97 to 117 (QLSM…LMGF), 138 to 158 (IPML…ALAV), 164 to 184 (ITAG…LSSI), and 193 to 213 (FTIL…QAYV).

The protein belongs to the ATPase A chain family. Component of the ATP synthase complex composed at least of ATP5F1A/subunit alpha, ATP5F1B/subunit beta, ATP5MC1/subunit c (homooctomer), MT-ATP6/subunit a, MT-ATP8/subunit 8, ATP5ME/subunit e, ATP5MF/subunit f, ATP5MG/subunit g, ATP5MK/subunit k, ATP5MJ/subunit j, ATP5F1C/subunit gamma, ATP5F1D/subunit delta, ATP5F1E/subunit epsilon, ATP5PF/subunit F6, ATP5PB/subunit b, ATP5PD/subunit d, ATP5PO/subunit OSCP. ATP synthase complex consists of a soluble F(1) head domain (subunits alpha(3) and beta(3)) - the catalytic core - and a membrane F(0) domain - the membrane proton channel (subunits c, a, 8, e, f, g, k and j). These two domains are linked by a central stalk (subunits gamma, delta, and epsilon) rotating inside the F1 region and a stationary peripheral stalk (subunits F6, b, d, and OSCP). Interacts with DNAJC30; interaction is direct.

Its subcellular location is the mitochondrion inner membrane. It carries out the reaction H(+)(in) = H(+)(out). Subunit a, of the mitochondrial membrane ATP synthase complex (F(1)F(0) ATP synthase or Complex V) that produces ATP from ADP in the presence of a proton gradient across the membrane which is generated by electron transport complexes of the respiratory chain. ATP synthase complex consist of a soluble F(1) head domain - the catalytic core - and a membrane F(1) domain - the membrane proton channel. These two domains are linked by a central stalk rotating inside the F(1) region and a stationary peripheral stalk. During catalysis, ATP synthesis in the catalytic domain of F(1) is coupled via a rotary mechanism of the central stalk subunits to proton translocation. With the subunit c (ATP5MC1), forms the proton-conducting channel in the F(0) domain, that contains two crucial half-channels (inlet and outlet) that facilitate proton movement from the mitochondrial intermembrane space (IMS) into the matrix. Protons are taken up via the inlet half-channel and released through the outlet half-channel, following a Grotthuss mechanism. This Tachyglossus aculeatus aculeatus (Southeast Australian short-beaked echidna) protein is ATP synthase F(0) complex subunit a.